The sequence spans 1391 residues: DNA-directed RNA polymerase subunit beta' (1391 aa).

Residues Cys-72, Cys-74, Cys-87, and Cys-90 each coordinate Zn(2+). Positions 462, 464, and 466 each coordinate Mg(2+). 4 residues coordinate Zn(2+): Cys-816, Cys-890, Cys-897, and Cys-900.

This sequence belongs to the RNA polymerase beta' chain family. In terms of assembly, the RNAP catalytic core consists of 2 alpha, 1 beta, 1 beta' and 1 omega subunit. When a sigma factor is associated with the core the holoenzyme is formed, which can initiate transcription. It depends on Mg(2+) as a cofactor. Zn(2+) serves as cofactor.

It carries out the reaction RNA(n) + a ribonucleoside 5'-triphosphate = RNA(n+1) + diphosphate. Its function is as follows. DNA-dependent RNA polymerase catalyzes the transcription of DNA into RNA using the four ribonucleoside triphosphates as substrates. The protein is DNA-directed RNA polymerase subunit beta' of Neisseria gonorrhoeae (strain NCCP11945).